Reading from the N-terminus, the 132-residue chain is Proline-rich protein sgp2 (132 aa).

Positions 1–20 are cleaved as a signal peptide; it reads MKYCFVFFVTLICLIANCSA. Disordered stretches follow at residues 23-62 and 87-132; these read EGDK…SNSR and GASV…LGLP. Over residues 36 to 47 the composition is skewed to basic and acidic residues; sequence KQIERASDKTSE. The segment covering 51-62 has biased composition (polar residues); that stretch reads GNTNAQGDSNSR. Residues 91-105 show a composition bias toward low complexity; it reads PQLPDLPTTPSLPDM.

The protein resides in the secreted. The chain is Proline-rich protein sgp2 (sgp2) from Glossina morsitans morsitans (Savannah tsetse fly).